Here is a 168-residue protein sequence, read N- to C-terminus: S-ribosylhomocysteine lyase (168 aa).

Fe cation-binding residues include His54, His58, and Cys128.

The protein belongs to the LuxS family. Homodimer. The cofactor is Fe cation.

It carries out the reaction S-(5-deoxy-D-ribos-5-yl)-L-homocysteine = (S)-4,5-dihydroxypentane-2,3-dione + L-homocysteine. Its function is as follows. Involved in the synthesis of autoinducer 2 (AI-2) which is secreted by bacteria and is used to communicate both the cell density and the metabolic potential of the environment. The regulation of gene expression in response to changes in cell density is called quorum sensing. Catalyzes the transformation of S-ribosylhomocysteine (RHC) to homocysteine (HC) and 4,5-dihydroxy-2,3-pentadione (DPD). In Histophilus somni (strain 129Pt) (Haemophilus somnus), this protein is S-ribosylhomocysteine lyase.